A 1692-amino-acid polypeptide reads, in one-letter code: Regulating synaptic membrane exocytosis protein 1 (1692 aa).

Residues M1 to S26 are disordered. The span at G9–Q20 shows a compositional bias: pro residues. The 161-residue stretch at L22–S182 folds into the RabBD domain. The FYVE-type zinc finger occupies K110–E170. Positions 116, 119, 132, 135, 140, 143, 162, and 165 each coordinate Zn(2+). A compositionally biased stretch (polar residues) spans G183–G199. The disordered stretch occupies residues G183 to S555. Positions V204–R217 are enriched in basic and acidic residues. Residues S223–P234 show a composition bias toward low complexity. The span at V305–S357 shows a compositional bias: basic and acidic residues. A compositionally biased stretch (basic residues) spans M377–R388. Residues R412–A430 are compositionally biased toward low complexity. Over residues P462 to R475 the composition is skewed to basic and acidic residues. The segment covering R497 to V509 has biased composition (polar residues). S500 carries the post-translational modification Phosphoserine. The span at K515–Q527 shows a compositional bias: basic residues. Over residues S545–S555 the composition is skewed to acidic residues. Position 578 is a phosphoserine (S578). The PDZ domain occupies R605–R691. Residues R698–P732 are disordered. Residues P700 to S716 are compositionally biased toward low complexity. Residues S728 and S731 each carry the phosphoserine modification. The region spanning L742 to Y865 is the C2 1 domain. The interval H870 to L1013 is disordered. S881 is subject to Phosphoserine. The span at S935–Q944 shows a compositional bias: polar residues. The residue at position 977 (S977) is a Phosphoserine. The span at R992–D1009 shows a compositional bias: basic and acidic residues. S1031 carries the post-translational modification Phosphoserine. Disordered stretches follow at residues N1118 to S1222 and G1235 to S1278. Basic and acidic residues-rich tracts occupy residues S1128–R1144 and P1157–S1170. A Phosphoserine modification is found at S1252. A compositionally biased stretch (polar residues) spans S1252 to S1265. The residue at position 1254 (T1254) is a Phosphothreonine. Phosphoserine occurs at positions 1256, 1308, 1310, 1311, 1339, 1340, and 1342. 3 disordered regions span residues C1332–S1394, L1408–K1428, and R1445–N1495. The segment covering S1345–S1366 has biased composition (low complexity). Phosphoserine is present on S1416. Residues E1477–T1490 are compositionally biased toward basic and acidic residues. The 119-residue stretch at A1538–Y1656 folds into the C2 2 domain. Phosphoserine occurs at positions 1677, 1680, 1683, and 1692.

As to quaternary structure, binds RAB3A, RAB3B and RAB3D that have been activated by GTP-binding. Interacts with RAB3C, RAB10, RAB26 and RAB37. Binds UNC13A. Interacts with TSPOAP1 and RIMBP2. Interacts with PPFIA3 and PPFIA4. Interacts with ERC1. Binds SNAP25, SYT1 and CACNA1B. Interaction with SYT1 is enhanced by calcium ions. Interaction with SNAP25 is weaker in the presence of calcium ions. Post-translationally, phosphorylated by BRSK1. As to expression, expressed in melanocytes. Detected in brain and retina.

Its subcellular location is the cell membrane. It localises to the synapse. The protein localises to the presynaptic cell membrane. Functionally, rab effector involved in exocytosis. May act as scaffold protein that regulates neurotransmitter release at the active zone. Essential for maintaining normal probability of neurotransmitter release and for regulating release during short-term synaptic plasticity. Plays a role in dendrite formation by melanocytes. The protein is Regulating synaptic membrane exocytosis protein 1 (RIMS1) of Homo sapiens (Human).